A 331-amino-acid chain; its full sequence is High-affinity nickel-transport protein NixA (331 aa).

The next 7 helical transmembrane spans lie at 3 to 23 (LWFP…ALLF), 77 to 97 (MGHS…IAWA), 110 to 130 (VVGT…NAII), 184 to 204 (PVGF…LLAL), 213 to 233 (VVGM…FDTL), 259 to 279 (ITAL…FQVI), and 302 to 322 (DLGY…FFLW).

Belongs to the NiCoT transporter (TC 2.A.52) family.

Its subcellular location is the cell inner membrane. Its function is as follows. High-affinity nickel intake protein. Imports nickel ions in an energy-dependent fashion. Necessary for the expression of catalytically active urease. In Helicobacter pylori (strain J99 / ATCC 700824) (Campylobacter pylori J99), this protein is High-affinity nickel-transport protein NixA (nixA).